We begin with the raw amino-acid sequence, 643 residues long: Probable potassium transport system protein Kup 2 (643 aa).

Positions 1–20 (MSSHVPSFLRGTPDMTAHGG) are disordered. 12 consecutive transmembrane segments (helical) span residues 27–47 (VAGL…TSPL), 70–90 (VLSL…VIII), 120–140 (LMVS…SIIT), 157–177 (PHLE…LFAI), 185–205 (VGKM…ILGI), 231–251 (GWHA…AEAL), 267–287 (WYLL…ALLI), 300–320 (LAPA…TVIA), 357–377 (IYLP…VVGF), 389–409 (VAVT…MLLI), 419–439 (WLIG…SIKI), and 440–460 (PDGG…LTTW).

Belongs to the HAK/KUP transporter (TC 2.A.72) family.

Its subcellular location is the cell inner membrane. It catalyses the reaction K(+)(in) + H(+)(in) = K(+)(out) + H(+)(out). Functionally, transport of potassium into the cell. Likely operates as a K(+):H(+) symporter. The protein is Probable potassium transport system protein Kup 2 of Paramagnetospirillum magneticum (strain ATCC 700264 / AMB-1) (Magnetospirillum magneticum).